A 169-amino-acid chain; its full sequence is Major fimbrial subunit SMF-1 (169 aa).

The N-terminal stretch at 1–11 is a signal peptide; it reads MLAAAPLAANA.

This sequence belongs to the fimbrial protein family.

It localises to the fimbrium. Involved in adherence to eukaryotic epithelial cells and abiotic surfaces. Mediates agglutination of animal red blood cells. This Stenotrophomonas maltophilia (strain K279a) protein is Major fimbrial subunit SMF-1.